Consider the following 149-residue polypeptide: Major outer capsid protein (149 aa).

Homotrimer.

It localises to the virion. In terms of biological role, assembles to form an icosahedral capsid with a T=13 symmetry. Drives the penetration of the inner capsid (core) into the cytoplasm. The protein is Major outer capsid protein (P8) of Pseudomonas phage phi6 (Bacteriophage phi-6).